Here is a 902-residue protein sequence, read N- to C-terminus: Cytosolic 10-formyltetrahydrofolate dehydrogenase (902 aa).

Positions 1–310 (MKIAVIGQSL…PASQYFKTAD (310 aa)) are hydrolase domain. 88 to 90 (QFI) provides a ligand contact to (6R)-10-formyltetrahydrofolate. H106 (proton donor) is an active-site residue. (6R)-10-formyltetrahydrofolate is bound at residue D142. The Carrier domain occupies 318–395 (EEEQKVSEEI…EFIQMVVRRM (78 aa)). S354 is subject to O-(pantetheine 4'-phosphoryl)serine. The aldehyde dehydrogenase domain stretch occupies residues 417–902 (TVKIPHQLFI…LKTKAVTIEY (486 aa)). Residues 571 to 573 (IPW), 597 to 600 (KPAQ), 630 to 635 (GSLIGQ), 650 to 651 (GS), and 673 to 674 (EL) contribute to the NADP(+) site. Residue E673 is the Proton acceptor of the active site. Residue C707 is the Proton donor of the active site. NADP(+)-binding positions include K757 and 804 to 806 (ESF).

This sequence in the N-terminal section; belongs to the GART family. The protein in the C-terminal section; belongs to the aldehyde dehydrogenase family. ALDH1L subfamily. Homotetramer. Phosphopantetheinylation at Ser-354 by AASDHPPT is required for the formyltetrahydrofolate dehydrogenase activity.

It localises to the cytoplasm. The protein resides in the cytosol. The enzyme catalyses (6R)-10-formyltetrahydrofolate + NADP(+) + H2O = (6S)-5,6,7,8-tetrahydrofolate + CO2 + NADPH + H(+). Cytosolic 10-formyltetrahydrofolate dehydrogenase that catalyzes the NADP(+)-dependent conversion of 10-formyltetrahydrofolate to tetrahydrofolate and carbon dioxide. May also have an NADP(+)-dependent aldehyde dehydrogenase activity towards formaldehyde, acetaldehyde, propionaldehyde, and benzaldehyde. The polypeptide is Cytosolic 10-formyltetrahydrofolate dehydrogenase (aldh1l1) (Xenopus laevis (African clawed frog)).